Reading from the N-terminus, the 314-residue chain is Aspartate carbamoyltransferase catalytic subunit (314 aa).

Carbamoyl phosphate-binding residues include R58 and T59. K86 lines the L-aspartate pocket. R108, H136, and Q139 together coordinate carbamoyl phosphate. Positions 169 and 223 each coordinate L-aspartate. Carbamoyl phosphate is bound by residues G264 and P265.

Belongs to the aspartate/ornithine carbamoyltransferase superfamily. ATCase family. As to quaternary structure, heterododecamer (2C3:3R2) of six catalytic PyrB chains organized as two trimers (C3), and six regulatory PyrI chains organized as three dimers (R2).

The catalysed reaction is carbamoyl phosphate + L-aspartate = N-carbamoyl-L-aspartate + phosphate + H(+). It functions in the pathway pyrimidine metabolism; UMP biosynthesis via de novo pathway; (S)-dihydroorotate from bicarbonate: step 2/3. Catalyzes the condensation of carbamoyl phosphate and aspartate to form carbamoyl aspartate and inorganic phosphate, the committed step in the de novo pyrimidine nucleotide biosynthesis pathway. This Opitutus terrae (strain DSM 11246 / JCM 15787 / PB90-1) protein is Aspartate carbamoyltransferase catalytic subunit.